Reading from the N-terminus, the 370-residue chain is Protein SHI RELATED SEQUENCE 1 (370 aa).

The interval 1-37 (MAGFFSLDGGGGGGGGGGNNQEDHRSNTNPPPPVSEA) is disordered. Positions 8–19 (DGGGGGGGGGGN) are enriched in gly residues. Zn(2+)-binding residues include C144, C147, C155, C160, C164, and C171. Positions 144-171 (CQDCGNQAKKDCSHMRCRTCCKSRGFEC) form a DNA-binding region, zn(2)-C6 fungal-type; degenerate. Residues 271 to 274 (IGGH) carry the Required for homo- and heterodimerization motif.

The protein belongs to the SHI protein family. In terms of assembly, forms homodimers and heterodimers with LRP1. In terms of tissue distribution, expressed in flowers, seeds and seedlings.

It localises to the nucleus. Transcription activator that binds DNA on 5'-ACTCTAC-3' and promotes auxin homeostasis-regulating gene expression (e.g. YUC genes), as well as genes affecting stamen development, cell expansion and timing of flowering. Synergistically with other SHI-related proteins, regulates gynoecium, stamen and leaf development in a dose-dependent manner, controlling apical-basal patterning. Promotes style and stigma formation, and influences vascular development during gynoecium development. May also have a role in the formation and/or maintenance of the shoot apical meristem (SAM). The chain is Protein SHI RELATED SEQUENCE 1 (SRS1) from Arabidopsis thaliana (Mouse-ear cress).